The sequence spans 298 residues: Ribosomal protein L11 methyltransferase (298 aa).

Threonine 152, glycine 173, aspartate 195, and asparagine 234 together coordinate S-adenosyl-L-methionine.

This sequence belongs to the methyltransferase superfamily. PrmA family.

The protein localises to the cytoplasm. It carries out the reaction L-lysyl-[protein] + 3 S-adenosyl-L-methionine = N(6),N(6),N(6)-trimethyl-L-lysyl-[protein] + 3 S-adenosyl-L-homocysteine + 3 H(+). In terms of biological role, methylates ribosomal protein L11. The sequence is that of Ribosomal protein L11 methyltransferase from Ralstonia pickettii (strain 12J).